A 310-amino-acid polypeptide reads, in one-letter code: DDRGK domain-containing protein 1 (310 aa).

The helical transmembrane segment at 1 to 21 (MAAIIYLAIAAVASILLFVAV) threads the bilayer. Residues 22-310 (KLLSTDTKTE…DSPAEISVNA (289 aa)) lie on the Cytoplasmic side of the membrane. Disordered regions lie at residues 38-85 (VGEL…DEYQ) and 110-162 (KAEK…LKEE). Over residues 52-70 (PRARARRGLRNKTNRSKTQ) the composition is skewed to basic residues. Over residues 76 to 85 (DYDDYDDEYQ) the composition is skewed to acidic residues.

This sequence belongs to the DDRGK1 family.

The protein resides in the endoplasmic reticulum membrane. Functionally, substrate adapter for ufmylation, the covalent attachment of the ubiquitin-like modifier UFM1 to substrate proteins. The polypeptide is DDRGK domain-containing protein 1 (Trichoplax adhaerens (Trichoplax reptans)).